Reading from the N-terminus, the 163-residue chain is Putative 4-hydroxy-4-methyl-2-oxoglutarate aldolase (163 aa).

Residues 76 to 79 and Arg98 contribute to the substrate site; that span reads GDMI. Asp99 contacts a divalent metal cation.

It belongs to the class II aldolase/RraA-like family. In terms of assembly, homotrimer. The cofactor is a divalent metal cation.

It carries out the reaction 4-hydroxy-4-methyl-2-oxoglutarate = 2 pyruvate. It catalyses the reaction oxaloacetate + H(+) = pyruvate + CO2. Its function is as follows. Catalyzes the aldol cleavage of 4-hydroxy-4-methyl-2-oxoglutarate (HMG) into 2 molecules of pyruvate. Also contains a secondary oxaloacetate (OAA) decarboxylase activity due to the common pyruvate enolate transition state formed following C-C bond cleavage in the retro-aldol and decarboxylation reactions. The sequence is that of Putative 4-hydroxy-4-methyl-2-oxoglutarate aldolase from Pseudomonas fluorescens.